Consider the following 237-residue polypeptide: Phosphatidylserine decarboxylase proenzyme (237 aa).

Catalysis depends on serine 206, which acts as the Schiff-base intermediate with substrate; via pyruvic acid. Serine 206 is subject to Pyruvic acid (Ser); by autocatalysis.

It belongs to the phosphatidylserine decarboxylase family. PSD-A subfamily. Heterodimer of a large membrane-associated beta subunit and a small pyruvoyl-containing alpha subunit. The cofactor is pyruvate. Post-translationally, is synthesized initially as an inactive proenzyme. Formation of the active enzyme involves a self-maturation process in which the active site pyruvoyl group is generated from an internal serine residue via an autocatalytic post-translational modification. Two non-identical subunits are generated from the proenzyme in this reaction, and the pyruvate is formed at the N-terminus of the alpha chain, which is derived from the carboxyl end of the proenzyme. The post-translation cleavage follows an unusual pathway, termed non-hydrolytic serinolysis, in which the side chain hydroxyl group of the serine supplies its oxygen atom to form the C-terminus of the beta chain, while the remainder of the serine residue undergoes an oxidative deamination to produce ammonia and the pyruvoyl prosthetic group on the alpha chain.

The protein localises to the cell membrane. It catalyses the reaction a 1,2-diacyl-sn-glycero-3-phospho-L-serine + H(+) = a 1,2-diacyl-sn-glycero-3-phosphoethanolamine + CO2. The protein operates within phospholipid metabolism; phosphatidylethanolamine biosynthesis; phosphatidylethanolamine from CDP-diacylglycerol: step 2/2. Catalyzes the formation of phosphatidylethanolamine (PtdEtn) from phosphatidylserine (PtdSer). This chain is Phosphatidylserine decarboxylase proenzyme, found in Nocardia farcinica (strain IFM 10152).